Consider the following 754-residue polypeptide: 5-methyltetrahydropteroyltriglutamate--homocysteine methyltransferase (754 aa).

Residues Arg17–Lys20 and Lys117 each bind 5-methyltetrahydropteroyltri-L-glutamate. Residues Ile431 to Ser433 and Glu484 contribute to the L-homocysteine site. Residues Ile431–Ser433 and Glu484 each bind L-methionine. 5-methyltetrahydropteroyltri-L-glutamate contacts are provided by residues Arg515–Cys516 and Trp561. An L-homocysteine-binding site is contributed by Asp599. Asp599 contacts L-methionine. Glu605 contacts 5-methyltetrahydropteroyltri-L-glutamate. Positions 641, 643, and 665 each coordinate Zn(2+). His694 (proton donor) is an active-site residue. Cys726 lines the Zn(2+) pocket.

Belongs to the vitamin-B12 independent methionine synthase family. Zn(2+) serves as cofactor.

The enzyme catalyses 5-methyltetrahydropteroyltri-L-glutamate + L-homocysteine = tetrahydropteroyltri-L-glutamate + L-methionine. It functions in the pathway amino-acid biosynthesis; L-methionine biosynthesis via de novo pathway; L-methionine from L-homocysteine (MetE route): step 1/1. Catalyzes the transfer of a methyl group from 5-methyltetrahydrofolate to homocysteine resulting in methionine formation. The protein is 5-methyltetrahydropteroyltriglutamate--homocysteine methyltransferase of Salmonella paratyphi B (strain ATCC BAA-1250 / SPB7).